The following is a 179-amino-acid chain: MASVTIRYANALADVVLSNRLDVTTAVRDLNNIVSMTIESEDLRKVWENPSIAVAQKRAILDGLVGMVGTPRIIRNFVAVLIDHQRVPLLPRIARQFELELNHRMGFADAEVTSVHELSAQDRQMIEQQIAKVVGKSVRARYKTNATLLGGAIIRVGSTVYDGSIKGQLAKIKEQLSAS.

The protein belongs to the ATPase delta chain family. In terms of assembly, F-type ATPases have 2 components, F(1) - the catalytic core - and F(0) - the membrane proton channel. F(1) has five subunits: alpha(3), beta(3), gamma(1), delta(1), epsilon(1). F(0) has three main subunits: a(1), b(2) and c(10-14). The alpha and beta chains form an alternating ring which encloses part of the gamma chain. F(1) is attached to F(0) by a central stalk formed by the gamma and epsilon chains, while a peripheral stalk is formed by the delta and b chains.

The protein localises to the cell inner membrane. Its function is as follows. F(1)F(0) ATP synthase produces ATP from ADP in the presence of a proton or sodium gradient. F-type ATPases consist of two structural domains, F(1) containing the extramembraneous catalytic core and F(0) containing the membrane proton channel, linked together by a central stalk and a peripheral stalk. During catalysis, ATP synthesis in the catalytic domain of F(1) is coupled via a rotary mechanism of the central stalk subunits to proton translocation. This protein is part of the stalk that links CF(0) to CF(1). It either transmits conformational changes from CF(0) to CF(1) or is implicated in proton conduction. This is ATP synthase subunit delta from Koribacter versatilis (strain Ellin345).